The following is a 241-amino-acid chain: Platelet-derived growth factor subunit B (241 aa).

Positions 1 to 20 are cleaved as a signal peptide; sequence MNRCWALFLSLCCYLRLVSA. Residues 21–81 constitute a propeptide, removed in mature form; it reads EGDPIPEELY…ELESLSRGRR (61 aa). The N-linked (GlcNAc...) asparagine glycan is linked to Asn63. Intrachain disulfides connect Cys97-Cys141, Cys130-Cys178, and Cys134-Cys180. Residues 191–241 constitute a propeptide, removed in mature form; it reads TPGSSQEQRAARTPQTRVTIRTVRVRRPPKGKHRKFKHTHDKTALKETLGA. Over residues 217-230 the composition is skewed to basic residues; sequence RPPKGKHRKFKHTH. A disordered region spans residues 217–241; sequence RPPKGKHRKFKHTHDKTALKETLGA.

The protein belongs to the PDGF/VEGF growth factor family. As to quaternary structure, antiparallel homodimer; disulfide-linked. Antiparallel heterodimer with PDGFA; disulfide-linked. The PDGFB homodimer interacts with PDGFRA and PDGFRB homodimers, and with heterodimers formed by PDGFRA and PDGFRB. The heterodimer composed of PDGFA and PDGFB interacts with PDGFRB homodimers, and with heterodimers formed by PDGFRA and PDGFRB. Interacts with XLKD1. Interacts with LRP1. Interacts with SORL1 (via the N-terminal ectodomain). Interacts with CD82; this interaction inhibits PDGFB-mediated signaling pathway.

It is found in the secreted. Growth factor that plays an essential role in the regulation of embryonic development, cell proliferation, cell migration, survival and chemotaxis. Potent mitogen for cells of mesenchymal origin. Required for normal proliferation and recruitment of pericytes and vascular smooth muscle cells in the central nervous system, skin, lung, heart and placenta. Required for normal blood vessel development, and for normal development of kidney glomeruli. Plays an important role in wound healing. Signaling is modulated by the formation of heterodimers with PDGFA. In Ovis aries (Sheep), this protein is Platelet-derived growth factor subunit B (PDGFB).